The chain runs to 344 residues: Phenylalanine--tRNA ligase alpha subunit (344 aa).

A Mg(2+)-binding site is contributed by E269.

It belongs to the class-II aminoacyl-tRNA synthetase family. Phe-tRNA synthetase alpha subunit type 1 subfamily. Tetramer of two alpha and two beta subunits. Mg(2+) is required as a cofactor.

Its subcellular location is the cytoplasm. The enzyme catalyses tRNA(Phe) + L-phenylalanine + ATP = L-phenylalanyl-tRNA(Phe) + AMP + diphosphate + H(+). The chain is Phenylalanine--tRNA ligase alpha subunit from Ralstonia nicotianae (strain ATCC BAA-1114 / GMI1000) (Ralstonia solanacearum).